A 176-amino-acid chain; its full sequence is 3-hydroxydecanoyl-[acyl-carrier-protein] dehydratase (176 aa).

Residue histidine 71 is part of the active site.

This sequence belongs to the thioester dehydratase family. FabA subfamily. Homodimer.

The protein resides in the cytoplasm. It catalyses the reaction a (3R)-hydroxyacyl-[ACP] = a (2E)-enoyl-[ACP] + H2O. It carries out the reaction (3R)-hydroxydecanoyl-[ACP] = (2E)-decenoyl-[ACP] + H2O. The enzyme catalyses (2E)-decenoyl-[ACP] = (3Z)-decenoyl-[ACP]. It participates in lipid metabolism; fatty acid biosynthesis. Its function is as follows. Necessary for the introduction of cis unsaturation into fatty acids. Catalyzes the dehydration of (3R)-3-hydroxydecanoyl-ACP to E-(2)-decenoyl-ACP and then its isomerization to Z-(3)-decenoyl-ACP. Can catalyze the dehydratase reaction for beta-hydroxyacyl-ACPs with saturated chain lengths up to 16:0, being most active on intermediate chain length. The chain is 3-hydroxydecanoyl-[acyl-carrier-protein] dehydratase from Afipia carboxidovorans (strain ATCC 49405 / DSM 1227 / KCTC 32145 / OM5) (Oligotropha carboxidovorans).